Reading from the N-terminus, the 466-residue chain is 3-isopropylmalate dehydratase large subunit (466 aa).

[4Fe-4S] cluster is bound by residues C347, C407, and C410.

This sequence belongs to the aconitase/IPM isomerase family. LeuC type 1 subfamily. In terms of assembly, heterodimer of LeuC and LeuD. It depends on [4Fe-4S] cluster as a cofactor.

It carries out the reaction (2R,3S)-3-isopropylmalate = (2S)-2-isopropylmalate. It participates in amino-acid biosynthesis; L-leucine biosynthesis; L-leucine from 3-methyl-2-oxobutanoate: step 2/4. Its function is as follows. Catalyzes the isomerization between 2-isopropylmalate and 3-isopropylmalate, via the formation of 2-isopropylmaleate. The chain is 3-isopropylmalate dehydratase large subunit from Shewanella woodyi (strain ATCC 51908 / MS32).